Reading from the N-terminus, the 344-residue chain is NADH-quinone oxidoreductase subunit H 2 (344 aa).

Helical transmembrane passes span 13–33 (LPILFKIVAIVLPLILIVAWL), 82–102 (ILFLLAPVLAIAPALAVWAVI), 116–136 (ALLYILAIGSMSVYGIILAGW), 161–181 (MGFALVGVLIAGGSLNLGEIV), 188–208 (FWHWFWLPLFPLFLIYFISGV), 240–260 (LFFLAEYIEMILVSTLAALMF), 280–300 (VPGIVWLLIKTAIFLFFYLWF), and 319–339 (VFIPITIVWLLVVGGARVAQL).

Belongs to the complex I subunit 1 family. As to quaternary structure, NDH-1 is composed of 14 different subunits. Subunits NuoA, H, J, K, L, M, N constitute the membrane sector of the complex.

It localises to the cell inner membrane. It catalyses the reaction a quinone + NADH + 5 H(+)(in) = a quinol + NAD(+) + 4 H(+)(out). Functionally, NDH-1 shuttles electrons from NADH, via FMN and iron-sulfur (Fe-S) centers, to quinones in the respiratory chain. The immediate electron acceptor for the enzyme in this species is believed to be ubiquinone. Couples the redox reaction to proton translocation (for every two electrons transferred, four hydrogen ions are translocated across the cytoplasmic membrane), and thus conserves the redox energy in a proton gradient. This subunit may bind ubiquinone. The sequence is that of NADH-quinone oxidoreductase subunit H 2 from Nitrosococcus oceani (strain ATCC 19707 / BCRC 17464 / JCM 30415 / NCIMB 11848 / C-107).